A 106-amino-acid chain; its full sequence is Follitropin subunit beta (106 aa).

6 disulfides stabilise this stretch: C1-C49, C15-C64, C18-C102, C26-C80, C30-C82, and C85-C92. N5 and N22 each carry an N-linked (GlcNAc...) asparagine glycan.

It belongs to the glycoprotein hormones subunit beta family. As to quaternary structure, heterodimer. The active follitropin is a heterodimer composed of an alpha chain/CGA shared with other hormones and a unique beta chain/FSHB shown here.

It localises to the secreted. Its function is as follows. Together with the alpha chain CGA constitutes follitropin, the follicle-stimulating hormone, and provides its biological specificity to the hormone heterodimer. Binds FSHR, a G protein-coupled receptor, on target cells to activate downstream signaling pathways. Follitropin is involved in follicle development and spermatogenesis in reproductive organs. The polypeptide is Follitropin subunit beta (FSHB) (Struthio camelus (Common ostrich)).